The sequence spans 832 residues: MVAANLEVPTSSSSSAATKRQKDVDNKLEKCLNDMLKLKTSSNNNSTSNSNNNAIMSHSLTGEHKDPKTALEGPTSSSSSSSSKYIGESQIPVPVQLYDPQKPLLQQQQQQQRICYPIGKSNSTSQLPMGGYQRLLQHQQQQHHQQQQQQHQEQQQYPQHKRPFLNWNSFACSAMNGASDPFMQQQHMPAHQQQQHLPHKLQQSYSSSHVPKQAPKSGLAMFLQKNTNKENKFGQPMQQQPPGMMPQMYGYQAPQQQSKIGYPRTGAPLTHSASFSSAQRPTALQFHQQHQQQQHLQQQQQHPQQQQHQHSSFGVGMMSRNYYNMPKQPERKPLQTFDPYAYPKPNQMQPVKYQQQQQHPHTQFQNASAGGGGGGAAGLQYDPNTNTQLFYASPASSSSNKQPQQPQQQQQQQQSQLQQSNSVIFNHSGQQHQPHQQQQNEMSKSALGLHFIETAKPVIQDDADGHLIYHTGDILHHRYKIMATLGEGTFGRVVKVKDMERDYCMALKIIKNVEKYREAAKLEINALEKIAQKDPHCDHLCVKMIDWFDYHGHMCIVFEMLGLSVFDFLRENNYEPYPLDQVRHMAYQLCYSVKFLHDNRLTHTDLKPENILFVDSDYTSHYNHKINREVRRVKNTDVRLIDFGSATFDHEHHSTIVSTRHYRAPEVILELGWSQPCDVWSIGCILFELYLGITLFQTHDNREHLAMMERILGQIPYRMARNHTLYSKTKTKYFYHGKLDWDEKSSAGRYVRDHCKPLFLCQLSDSEDHCELFSLIKKMLEYEPSSRITLGEALHHPFFDRLPPHHRVGEVSNKQPLSSGSSSRERSHSLSR.

4 disordered regions span residues 1–86 (MVAA…SKYI), 135–158 (LLQH…QQYP), 179–215 (SDPF…KQAP), and 258–419 (SKIG…QLQQ). Polar residues predominate over residues 8-18 (VPTSSSSSAAT). Residues 20–32 (RQKDVDNKLEKCL) show a composition bias toward basic and acidic residues. Low complexity-rich tracts occupy residues 40-53 (TSSN…SNNN), 137-158 (QHQQ…QQYP), and 183-203 (MQQQ…KLQQ). The segment covering 271 to 282 (HSASFSSAQRPT) has biased composition (polar residues). Composition is skewed to low complexity over residues 285–310 (QFHQ…QHQH), 347–365 (QMQP…TQFQ), and 396–419 (SSSS…QLQQ). In terms of domain architecture, Protein kinase spans 479 to 799 (YKIMATLGEG…LGEALHHPFF (321 aa)). Residues 485–493 (LGEGTFGRV) and Lys-508 each bind ATP. Asp-605 functions as the Proton acceptor in the catalytic mechanism. The tract at residues 809–832 (GEVSNKQPLSSGSSSRERSHSLSR) is disordered. A compositionally biased stretch (basic and acidic residues) spans 823 to 832 (SRERSHSLSR).

Belongs to the protein kinase superfamily. CMGC Ser/Thr protein kinase family. Lammer subfamily. Interacts (via N-terminus) with x16 (via Arg/Ser-rich region). Interacts with eEF1gamma (via C-terminus); the interaction is probably direct, is transient and leads to phosphorylation of eEF1gamma by Doa. Requires Mg(2+) as cofactor. In terms of processing, autophosphorylated on serine, threonine and tyrosine residues. In terms of tissue distribution, ubiquitous expression in embryos. Stage 17 embryos show elevated expression in CNS and brain. Ubiquitous expression in larval imaginal disks. Increased expression posterior to the eye-antennal disk morphogenetic furrow.

It localises to the cytoplasm. It is found in the cytosol. The protein resides in the nucleus. It catalyses the reaction L-seryl-[protein] + ATP = O-phospho-L-seryl-[protein] + ADP + H(+). The catalysed reaction is L-threonyl-[protein] + ATP = O-phospho-L-threonyl-[protein] + ADP + H(+). It carries out the reaction L-tyrosyl-[protein] + ATP = O-phospho-L-tyrosyl-[protein] + ADP + H(+). Functionally, dual specificity kinase involved in the negative regulation of microtubule-based transport through phsophorylation of the microtuble-binding protein eEF1gamma. May function in the control of alternative splicing by phosphorylating serine/arginine-rich splicing factors, the SR proteins, including x16. Negative regulator of the copia retrotransposon element of the white (w) gene. In the eye, it is required for normal pigmentation, photoreceptor cell development and for organization of interommatidial bristles. Also essential for embryonic segmentation and differentiation of the nervous system. May be the specific isoform involved in regulation of microtubule-based transport through phosphorylation of the microtubule binding protein eEF1gamma. This Drosophila melanogaster (Fruit fly) protein is Serine/threonine-protein kinase Doa.